A 327-amino-acid chain; its full sequence is Movement protein (327 aa).

Residues 297-327 (SASSSNTENELARVSQNIDLLKNKLKEICGE) adopt a coiled-coil conformation.

The protein belongs to the caulimoviridae movement protein family. Homotrimer, through the coiled-coil domain. Interacts with VAP. May interact (via N-terminus) with host prenylated Rab acceptor protein 1D (PRA1D).

It localises to the host cell junction. Its subcellular location is the host plasmodesma. Transports viral genome to neighboring plant cells directly through plasmosdesmata, without any budding. The movement protein allows efficient cell to cell propagation, by bypassing the host cell wall barrier. Acts by forming tubules structures that increase the size exclusion limit (SEL) of plasmodesmata, thereby allowing viral ribonucleocapsids to spread directly to neighboring cells. This is Movement protein from Cauliflower mosaic virus (strain CM-1841) (CaMV).